The chain runs to 223 residues: tRNA (guanine-N(7)-)-methyltransferase (223 aa).

The S-adenosyl-L-methionine site is built by glutamate 45, glutamate 70, and aspartate 125. Residue aspartate 125 is part of the active site. Substrate-binding positions include lysine 129, aspartate 161, and 201–204; that span reads TEYE.

It belongs to the class I-like SAM-binding methyltransferase superfamily. TrmB family.

It catalyses the reaction guanosine(46) in tRNA + S-adenosyl-L-methionine = N(7)-methylguanosine(46) in tRNA + S-adenosyl-L-homocysteine. It participates in tRNA modification; N(7)-methylguanine-tRNA biosynthesis. Functionally, catalyzes the formation of N(7)-methylguanine at position 46 (m7G46) in tRNA. This is tRNA (guanine-N(7)-)-methyltransferase from Mesoplasma florum (strain ATCC 33453 / NBRC 100688 / NCTC 11704 / L1) (Acholeplasma florum).